Here is a 595-residue protein sequence, read N- to C-terminus: Metacaspase-1 (595 aa).

Residues histidine 411 and cysteine 466 contribute to the active site.

Belongs to the peptidase C14B family. As to quaternary structure, monomer.

With respect to regulation, activated by Ca(2+). In terms of biological role, cysteine protease that cleaves specifically after arginine or lysine residues. This chain is Metacaspase-1, found in Plasmodium berghei (strain Anka).